A 948-amino-acid chain; its full sequence is Bifunctional glutamine synthetase adenylyltransferase/adenylyl-removing enzyme (948 aa).

Residues 1 to 447 (MLTPDNKLMS…EFQQVVGAES (447 aa)) are adenylyl removase. The adenylyl transferase stretch occupies residues 453–948 (EQGLQVLWQD…NCWNHLLEDD (496 aa)).

It belongs to the GlnE family. It depends on Mg(2+) as a cofactor.

It carries out the reaction [glutamine synthetase]-O(4)-(5'-adenylyl)-L-tyrosine + phosphate = [glutamine synthetase]-L-tyrosine + ADP. The enzyme catalyses [glutamine synthetase]-L-tyrosine + ATP = [glutamine synthetase]-O(4)-(5'-adenylyl)-L-tyrosine + diphosphate. Functionally, involved in the regulation of glutamine synthetase GlnA, a key enzyme in the process to assimilate ammonia. When cellular nitrogen levels are high, the C-terminal adenylyl transferase (AT) inactivates GlnA by covalent transfer of an adenylyl group from ATP to specific tyrosine residue of GlnA, thus reducing its activity. Conversely, when nitrogen levels are low, the N-terminal adenylyl removase (AR) activates GlnA by removing the adenylyl group by phosphorolysis, increasing its activity. The regulatory region of GlnE binds the signal transduction protein PII (GlnB) which indicates the nitrogen status of the cell. This is Bifunctional glutamine synthetase adenylyltransferase/adenylyl-removing enzyme from Idiomarina loihiensis (strain ATCC BAA-735 / DSM 15497 / L2-TR).